A 336-amino-acid polypeptide reads, in one-letter code: tRNA N6-adenosine threonylcarbamoyltransferase (336 aa).

Fe cation is bound by residues histidine 114 and histidine 118. Residues 136–140 (LVSGG), aspartate 169, glycine 182, aspartate 186, and asparagine 275 each bind substrate. Aspartate 301 lines the Fe cation pocket.

The protein belongs to the KAE1 / TsaD family. Fe(2+) is required as a cofactor.

The protein resides in the cytoplasm. The catalysed reaction is L-threonylcarbamoyladenylate + adenosine(37) in tRNA = N(6)-L-threonylcarbamoyladenosine(37) in tRNA + AMP + H(+). In terms of biological role, required for the formation of a threonylcarbamoyl group on adenosine at position 37 (t(6)A37) in tRNAs that read codons beginning with adenine. Is involved in the transfer of the threonylcarbamoyl moiety of threonylcarbamoyl-AMP (TC-AMP) to the N6 group of A37, together with TsaE and TsaB. TsaD likely plays a direct catalytic role in this reaction. This chain is tRNA N6-adenosine threonylcarbamoyltransferase, found in Streptococcus pneumoniae (strain JJA).